A 578-amino-acid polypeptide reads, in one-letter code: Raftlin (578 aa).

Gly2 carries N-myristoyl glycine lipidation. Cys3 carries the S-palmitoyl cysteine lipid modification. The segment covering Val169–Thr184 has biased composition (polar residues). 3 disordered regions span residues Val169–Glu271, Phe449–Leu525, and Cys551–Asn578. Residues Ser183, Ser199, and Ser220 each carry the phosphoserine modification. A compositionally biased stretch (basic and acidic residues) spans Glu185–Gly206. Residues Arg457 to Leu466 are compositionally biased toward basic residues. Over residues Ser467–Ser485 the composition is skewed to basic and acidic residues. Position 505 is a phosphoserine (Ser505). Basic and acidic residues-rich tracts occupy residues Glu506 to Glu518 and Pro557 to Asn578.

The protein belongs to the raftlin family. Interacts with TLR4; the interaction occurs in response to lipopolysaccharide stimulation. Interacts with CLTC; the interaction occurs in response to pathogens. Interacts with AP2A1 and AP2B1. Expressed in B-cells (at protein level). Expressed in dendritic cells and macrophages.

The protein resides in the cell membrane. Its subcellular location is the cytoplasm. It localises to the membrane raft. The protein localises to the endosome. It is found in the early endosome. Involved in protein trafficking via association with clathrin and AP2 complex. Upon bacterial lipopolysaccharide stimulation, mediates internalization of TLR4 to endosomes in dendritic cells and macrophages; and internalization of poly(I:C) to TLR3-positive endosomes in myeloid dendritic cells and epithelial cells; resulting in activation of TICAM1-mediated signaling and subsequent IFNB1 production. Involved in T-cell antigen receptor-mediated signaling by regulating tyrosine kinase LCK localization, T-cell dependent antibody production and cytokine secretion. May regulate B-cell antigen receptor-mediated signaling. May play a pivotal role in the formation and/or maintenance of lipid rafts. The polypeptide is Raftlin (RFTN1) (Homo sapiens (Human)).